Reading from the N-terminus, the 179-residue chain is Large ribosomal subunit protein uL6 (179 aa).

The protein belongs to the universal ribosomal protein uL6 family. Part of the 50S ribosomal subunit.

In terms of biological role, this protein binds to the 23S rRNA, and is important in its secondary structure. It is located near the subunit interface in the base of the L7/L12 stalk, and near the tRNA binding site of the peptidyltransferase center. In Chlorobium chlorochromatii (strain CaD3), this protein is Large ribosomal subunit protein uL6.